The following is a 308-amino-acid chain: MQIYPLRFVPNKINFDFMNFKKVSYSFSIILSLISLIWIGIYKFNFGIDFVGGIVIEVRLDRAPDLPKMRAVLSALGIGEVVLQNFESEHDLSIRFGSSSEENLMKNIDIIKTSLRNNFPYNFEYRKVDFVGPQVGRHLIEAGAMAMLFSFLAIMVYIGVRFEWYFGFGILIALVHDVILALGFMSITKLDFNLSTIAAVLTIIGYSVNDSVVIYDRIRENLRKYHKKNITEIINLSINETLSRTILTVITTLLANLALILFGGKAIHSFSVLVFFGIIAGTYSSIFISAPILTIFANRKFNKKVIER.

6 helical membrane passes run 23–42, 140–160, 164–184, 194–214, 246–266, and 272–292; these read VSYS…IGIY, IEAG…YIGV, WYFG…ALGF, LSTI…SVVI, ILTV…GGKA, and VLVF…SAPI.

It belongs to the SecD/SecF family. SecF subfamily. Forms a complex with SecD. Part of the essential Sec protein translocation apparatus which comprises SecA, SecYEG and auxiliary proteins SecDF-YajC and YidC.

The protein localises to the cell inner membrane. Its function is as follows. Part of the Sec protein translocase complex. Interacts with the SecYEG preprotein conducting channel. SecDF uses the proton motive force (PMF) to complete protein translocation after the ATP-dependent function of SecA. This Rickettsia typhi (strain ATCC VR-144 / Wilmington) protein is Protein translocase subunit SecF.